Here is a 211-residue protein sequence, read N- to C-terminus: Dual specificity protein phosphatase 26 (211 aa).

In terms of domain architecture, Tyrosine-protein phosphatase spans 60 to 207 (NHADEVWPGL…LLALDRRLRQ (148 aa)). Catalysis depends on Cys-152, which acts as the Phosphocysteine intermediate.

It belongs to the protein-tyrosine phosphatase family. Non-receptor class dual specificity subfamily. As to quaternary structure, interacts with HSF4. Brain and skeletal muscle. In the brain it is expressed ubiquitously except in the hippocampus.

The protein resides in the cytoplasm. Its subcellular location is the nucleus. It is found in the golgi apparatus. The catalysed reaction is O-phospho-L-tyrosyl-[protein] + H2O = L-tyrosyl-[protein] + phosphate. The enzyme catalyses O-phospho-L-seryl-[protein] + H2O = L-seryl-[protein] + phosphate. It carries out the reaction O-phospho-L-threonyl-[protein] + H2O = L-threonyl-[protein] + phosphate. Inactivates MAPK1 and MAPK3 which leads to dephosphorylation of heat shock factor protein 4 and a reduction in its DNA-binding activity. This chain is Dual specificity protein phosphatase 26 (Dusp26), found in Mus musculus (Mouse).